A 116-amino-acid polypeptide reads, in one-letter code: Cell cycle protein GpsB (116 aa).

The stretch at 32–69 (LDDVIKDYETYSALVKELREENSRLKQELSKRMQEAPN) forms a coiled coil. Positions 57–78 (KQELSKRMQEAPNSTASQVHQS) are disordered. Residues 67 to 78 (APNSTASQVHQS) show a composition bias toward polar residues.

It belongs to the GpsB family. Forms polymers through the coiled coil domains. Interacts with PBP1, MreC and EzrA.

It is found in the cytoplasm. Divisome component that associates with the complex late in its assembly, after the Z-ring is formed, and is dependent on DivIC and PBP2B for its recruitment to the divisome. Together with EzrA, is a key component of the system that regulates PBP1 localization during cell cycle progression. Its main role could be the removal of PBP1 from the cell pole after pole maturation is completed. Also contributes to the recruitment of PBP1 to the division complex. Not essential for septum formation. The chain is Cell cycle protein GpsB from Streptococcus gordonii (strain Challis / ATCC 35105 / BCRC 15272 / CH1 / DL1 / V288).